A 458-amino-acid chain; its full sequence is Argininosuccinate lyase (458 aa).

Belongs to the lyase 1 family. Argininosuccinate lyase subfamily.

Its subcellular location is the cytoplasm. The catalysed reaction is 2-(N(omega)-L-arginino)succinate = fumarate + L-arginine. It functions in the pathway amino-acid biosynthesis; L-arginine biosynthesis; L-arginine from L-ornithine and carbamoyl phosphate: step 3/3. The polypeptide is Argininosuccinate lyase (Geobacter sulfurreducens (strain ATCC 51573 / DSM 12127 / PCA)).